The sequence spans 1842 residues: MRPEVEQELAHTLLLELLAYQFASPVRWIETQDVILSPPVSAERIVEIGPSPTLAGMAKRTLKLKYENMDAALSINREVLCYSKDAREIYYNFEDEVADEPAEAPASTSSTPKVETAAAAAPAATPAPAPAQTSAPAAALPDEPPKALEVLHTLVAQKLKKSIEEVSPQKSIKDLVGGKSTLQNEILGDLQKEFGATPEKPEEVPLDELGAIMQSSFNGSLGKQSSSLISRMISSKMPGGFNNSAVRGYLGNRYGLGPGRLESVLLLALTMEPASRLGSEADAKAWLDSVAQKYAARNGVTLSSPTAEGGSSSGSAAVIDEETFKKLTKNNTMLVTQQLELFARYLNKDLRAGQKAQVAEKVISDTLRAQLDLWNEEHGEFYASGIAPIFSPLKARVYDSDWNWARQDALKMFFDIIFGRLKHVDTEIVARCISVMNRSNPTLLEFMQYHIDHCPAEKGETYQLAKTLGQQLIDNCKSVIDAPPVFKNVNHPTAPSTTIDERGNLNYEEIPRPGVRKLTHYVTEMAKGGKLPTESKNKAKVQNDLARIYRIIKSQNKMSRSSKLQIKQLYGQVLHALSLPLPSSNDEQTPVKETIPFLHIRKKSVDGNWEFNKSLTGTYLDVLESGAKNGITYQDKYALVTGAGAGSIGAQIVEGLLAGGAKVVVTTSRFSRKVTEFYQSLYTRHGSRGSCLIVVPFNQGSKTDVEALIDYIYDEKKGLGWNLDYIVPFAAIPENGREIDGIDSRSEFAHRIMLTNILRLLGAVKSQKASRGMDTRPAQVILPLSPNHGTFGNDGLYSESKLGLETLFNRWYSESWANYLTICGAVIGWTRGTGLMAPNNIVSQGIEKYGVRTFSQSEMAFNILGLMSQKVVDLCQSEPIYANLNGGLELLPDLKDLSTRLRTELLETAEIRRAVAAETAFDHSITNGPDSEAVFQKTAIQPRANLKFNFPKLKPYEALSHLSDLRGMVDLEKVPVVTGFSEVGPWGNSRTRWDMECYGEFSLEGCVEIAWIMGLIKNFNGKGKDGKPYSGWVDTKTGEPVDDKDVKAKYEKYILEHCGIRIIEAELFHGYNPEKKELLQEVVIDHDLEPFEASKEAAHEFKLRHGDQVEIFEIPDSTEWSVRFKRGTSMLIPKALRFDRFVAGQIPLGWDPKRYGIPDDIISQVDPTTLYVLVSTVEALVASGITDPYECYKYIHVSELGNTVGSGIGGMSALRGMYKDRWTDKPVQKDILQESFINTANAWINMLLLSASGPIKTPVGACATAVESVDAAVDLITSGKARICISGGYDDFSEEGSYEFANMGATSNAAKETERGRTPQEMSRPATSTRDGFMESQGAGVQIIMQAKLAIEMGVPIHGIVGYVSTAMDKQGRSVPAPGQGILTGAREIATKTPLPIVDLKFRSRQLQRRRSQIGEWAEREYLYLEEELDAMKVQNPDLDLEAYRIERINVIKEEVVRQEKEALNTFGNEFWKRDPTIAPIRGALAVWGLTIDDLGVASFHGTSTKANEKNECDVIDSQLTHLGRSKGNAVYGVFQKYLTGHSKGGAGAWMLNGALQILRSGFVPGNRNADNIDEYLARFDRVMFPSEGIQTDGIKAASVTAFGFGQVGGQVIVIHPDYIYGVIDEATYNAYKAKTAARYKASYRYTHDALVYNNLVRAKDSPPYTKEQEKAVYLNPLARASKSKAGTWTFPATLPAESDISKTNETTRTLQSLTTSLTNSNENVGVDVELVSAISIDNETFIERNFTDTERKYCFAAPNPQASFAGRWSAKEAVFKSLGISGKGAAAPLKDIEIISSESGAPEVVLHGEAAKAATTAGVKSVSVSISHDDNQSVSVALAHK.

The interval 101–141 is disordered; the sequence is PAEAPASTSSTPKVETAAAAAPAATPAPAPAQTSAPAAALP. The segment covering 116 to 139 has biased composition (low complexity); that stretch reads TAAAAAPAATPAPAPAQTSAPAAA. In terms of domain architecture, Carrier spans 145-220; sequence PKALEVLHTL…AIMQSSFNGS (76 aa). Position 180 is an O-(pantetheine 4'-phosphoryl)serine (S180). S604 is subject to Phosphoserine. The Ketosynthase family 3 (KS3) domain maps to 1079-1616; that stretch reads LQEVVIDHDL…QVGGQVIVIH (538 aa). Residue C1262 is the For beta-ketoacyl synthase activity of the active site. A disordered region spans residues 1304–1332; it reads GATSNAAKETERGRTPQEMSRPATSTRDG. Residue S1412 is modified to Phosphoserine. Residues H1501 and H1542 each act as for beta-ketoacyl synthase activity in the active site. Mg(2+)-binding residues include D1728, V1729, and E1730. Residues 1728 to 1730, Y1754, S1764, 1773 to 1783, 1797 to 1800, and 1827 to 1829 contribute to the acetyl-CoA site; these read DVE, EAVFKSLGISG, SSES, and ISH. S1828 and H1829 together coordinate Mg(2+).

This sequence belongs to the thiolase-like superfamily. Fungal fatty acid synthetase subunit alpha family. As to quaternary structure, [Alpha(6)beta(6)] hexamers of two multifunctional subunits (alpha and beta).

The catalysed reaction is acetyl-CoA + n malonyl-CoA + 2n NADPH + 4n H(+) = a long-chain-acyl-CoA + n CoA + n CO2 + 2n NADP(+).. The enzyme catalyses a fatty acyl-[ACP] + malonyl-[ACP] + H(+) = a 3-oxoacyl-[ACP] + holo-[ACP] + CO2. It carries out the reaction a (3R)-hydroxyacyl-[ACP] + NADP(+) = a 3-oxoacyl-[ACP] + NADPH + H(+). Fatty acid synthetase catalyzes the formation of long-chain fatty acids from acetyl-CoA, malonyl-CoA and NADPH. The alpha subunit contains domains for: acyl carrier protein, 3-oxoacyl-[acyl-carrier-protein] reductase, and 3-oxoacyl-[acyl-carrier-protein] synthase. This subunit coordinates the binding of the six beta subunits to the enzyme complex. This Schizosaccharomyces pombe (strain 972 / ATCC 24843) (Fission yeast) protein is Fatty acid synthase subunit alpha (fas2).